Consider the following 95-residue polypeptide: Integration host factor subunit beta (95 aa).

Residues 56–76 form a disordered region; it reads RAPRTGRNPKTGTSVELDGKY.

Belongs to the bacterial histone-like protein family. As to quaternary structure, heterodimer of an alpha and a beta chain.

Functionally, this protein is one of the two subunits of integration host factor, a specific DNA-binding protein that functions in genetic recombination as well as in transcriptional and translational control. The chain is Integration host factor subunit beta from Shewanella woodyi (strain ATCC 51908 / MS32).